The chain runs to 186 residues: Elongation factor P (186 aa).

It belongs to the elongation factor P family.

The protein localises to the cytoplasm. The protein operates within protein biosynthesis; polypeptide chain elongation. In terms of biological role, involved in peptide bond synthesis. Stimulates efficient translation and peptide-bond synthesis on native or reconstituted 70S ribosomes in vitro. Probably functions indirectly by altering the affinity of the ribosome for aminoacyl-tRNA, thus increasing their reactivity as acceptors for peptidyl transferase. This is Elongation factor P from Neisseria gonorrhoeae (strain ATCC 700825 / FA 1090).